Consider the following 479-residue polypeptide: Cardiolipin synthase A (479 aa).

A run of 2 helical transmembrane segments spans residues 8–28 (LLAYFIATLHFLGTLAAIHAV) and 38–58 (IAWALSLMFMPYLTLIPYLIF). PLD phosphodiesterase domains are found at residues 218-245 (VNFRNHRKIVVVDGITGFVGGHNVGDEY) and 392-419 (TPGFLHQKVVLVDSEISAIGSANMDNRS). Catalysis depends on residues His223, Lys225, Asp230, His397, Lys399, and Asp404.

It belongs to the phospholipase D family. Cardiolipin synthase subfamily. ClsA sub-subfamily.

Its subcellular location is the cell inner membrane. The enzyme catalyses 2 a 1,2-diacyl-sn-glycero-3-phospho-(1'-sn-glycerol) = a cardiolipin + glycerol. Its function is as follows. Catalyzes the reversible phosphatidyl group transfer from one phosphatidylglycerol molecule to another to form cardiolipin (CL) (diphosphatidylglycerol) and glycerol. The protein is Cardiolipin synthase A of Pseudomonas fluorescens (strain SBW25).